Consider the following 204-residue polypeptide: MDYEIENNHADSIRRGSIEVICGSMFSGKTEELLRRLRRAKIARQTVEIFKPTIDIRYDETDVVSHDKNAIASTPVDNSANILLLSSQVDVVGIDEAQFFDEGLVEVAQQLADQGVRVVIAGLDMDFRRQPFGPMPGLCAIADSVTKVHAVCVECGRLASYSFRRVQGDQQVMLGELNEYSPLCRTCYRKCSSPPQTEEIHSTI.

ATP is bound by residues 23 to 30 and 95 to 98; these read GSMFSGKT and DEAQ. Glu-96 acts as the Proton acceptor in catalysis. Zn(2+)-binding residues include Cys-152, Cys-155, Cys-184, and Cys-187.

It belongs to the thymidine kinase family. In terms of assembly, homotetramer.

Its subcellular location is the cytoplasm. The enzyme catalyses thymidine + ATP = dTMP + ADP + H(+). The chain is Thymidine kinase from Porphyromonas gingivalis (strain ATCC BAA-308 / W83).